We begin with the raw amino-acid sequence, 414 residues long: Histidine--tRNA ligase (414 aa).

It belongs to the class-II aminoacyl-tRNA synthetase family. In terms of assembly, homodimer.

The protein resides in the cytoplasm. It carries out the reaction tRNA(His) + L-histidine + ATP = L-histidyl-tRNA(His) + AMP + diphosphate + H(+). The sequence is that of Histidine--tRNA ligase from Solibacter usitatus (strain Ellin6076).